Here is a 388-residue protein sequence, read N- to C-terminus: Nuclear hormone receptor family member nhr-16 (388 aa).

The segment at residues 11 to 86 (FLKCAICQES…VGMNPAGVQQ (76 aa)) is a DNA-binding region (nuclear receptor). NR C4-type zinc fingers lie at residues 14 to 34 (CAICQESAEGFHFGAEACRAC) and 50 to 74 (CQGNNDCDVTINIRCMCRACRYIKC). The NR LBD domain maps to 115 to 387 (PPSSLMLHIP…DEFYNLMSGR (273 aa)).

Belongs to the nuclear hormone receptor family.

It is found in the nucleus. Functionally, orphan nuclear receptor. This Caenorhabditis elegans protein is Nuclear hormone receptor family member nhr-16 (nhr-16).